A 330-amino-acid polypeptide reads, in one-letter code: Autoinducer 2 import system permease protein LsrD (330 aa).

Residues 1–4 (MRIR) are Cytoplasmic-facing. Residues 5–25 (YGWELALAALLVIEIVAFGAI) traverse the membrane as a helical segment. Over 26 to 42 (NPRMLDLNMLLFSTSDF) the chain is Periplasmic. A helical membrane pass occupies residues 43–63 (ICIGIVALPLTMVIVSGGIDI). Residues 64 to 67 (SFGS) are Cytoplasmic-facing. The next 2 helical transmembrane spans lie at 68-88 (TIGL…PMPL) and 89-109 (AILL…GLII). Topologically, residues 110–115 (YTKVNP) are cytoplasmic. A helical membrane pass occupies residues 116–136 (LVITLGTLYLFAGSALLLSGM). The Periplasmic segment spans residues 137-159 (AGATGYEGIGGFPMAFTDFANLD). Residues 160–180 (VLGLPVPLIIFLICLLVFWLW) traverse the membrane as a helical segment. The Cytoplasmic portion of the chain corresponds to 181–209 (LHKTHAGRNVFLIGQSPRVALYSAIPVNR). The chain crosses the membrane as a helical span at residues 210-230 (TLCALYAMTGLASAVAAVLLV). The Periplasmic segment spans residues 231-237 (SYFGSAR). The next 2 membrane-spanning stretches (helical) occupy residues 238–258 (SDLG…GGAN) and 259–279 (IYGG…VGYL). At 280 to 285 (QQGLQM) the chain is on the periplasmic side. Residues 286–306 (AGVPNQVSSALSGALLIVVVV) traverse the membrane as a helical segment. The Cytoplasmic portion of the chain corresponds to 307–330 (GRSVSLHRQQIKEWLARRANNPLP).

The protein belongs to the binding-protein-dependent transport system permease family. AraH/RbsC subfamily. The complex is composed of two ATP-binding proteins (LsrA), two transmembrane proteins (LsrC and LsrD) and a solute-binding protein (LsrB).

Its subcellular location is the cell inner membrane. Part of the ABC transporter complex LsrABCD involved in autoinducer 2 (AI-2) import. Probably responsible for the translocation of the substrate across the membrane. This is Autoinducer 2 import system permease protein LsrD (lsrD) from Shigella flexneri serotype 5b (strain 8401).